A 528-amino-acid polypeptide reads, in one-letter code: Biotin carboxylase 1, chloroplastic (528 aa).

The N-terminal 51 residues, 1–51 (MEATLPVCKSVTSTPGLFMGKTSGIRSSQCSFMMGNKVNFPRQRAQTAHVH), are a transit peptide targeting the chloroplast. Residues Lys-179, Lys-221, 227-228 (GG), 263-266 (EKYV), and His-271 each bind ATP. In terms of domain architecture, ATP-grasp spans 183–380 (RETMKKAGVP…LIEEQIRVAM (198 aa)). Residue Lys-300 participates in hydrogencarbonate binding. Glu-338 and Glu-351 together coordinate ATP. The Mg(2+) site is built by Glu-338, Glu-351, and Asn-353. Residues Glu-338, Glu-351, and Asn-353 each coordinate Mn(2+). Arg-355, Val-358, and Arg-401 together coordinate hydrogencarbonate. Arg-355 is an active-site residue. Residue Arg-401 participates in biotin binding.

As to quaternary structure, acetyl-CoA carboxylase is a heterohexamer composed of biotin carboxyl carrier protein, biotin carboxylase and two subunits each of ACCase subunit alpha and ACCase plastid-coded subunit beta (accD). Mg(2+) serves as cofactor. The cofactor is Mn(2+).

Its subcellular location is the plastid. It localises to the chloroplast. It catalyses the reaction N(6)-biotinyl-L-lysyl-[protein] + hydrogencarbonate + ATP = N(6)-carboxybiotinyl-L-lysyl-[protein] + ADP + phosphate + H(+). Its pathway is lipid metabolism; malonyl-CoA biosynthesis; malonyl-CoA from acetyl-CoA: step 1/1. This protein is a component of the acetyl coenzyme A carboxylase complex; first, biotin carboxylase catalyzes the carboxylation of the carrier protein and then the transcarboxylase transfers the carboxyl group to form malonyl-CoA. This chain is Biotin carboxylase 1, chloroplastic, found in Populus trichocarpa (Western balsam poplar).